A 510-amino-acid chain; its full sequence is NAD(P)H-quinone oxidoreductase subunit 2, chloroplastic (510 aa).

12 helical membrane-spanning segments follow: residues 24–44, 59–79, 99–119, 124–144, 149–169, 184–204, 229–249, 295–315, 323–343, 354–374, 395–415, and 418–438; these read LLLF…GLIL, WFYF…FFRW, IFQF…VEYI, MAIT…MFLC, LITI…LSGY, LLMG…LYGL, ISIA…PAPF, WHLL…LIAL, MLAY…IVGD, YMLF…SFGL, ALSS…AGFF, and LYLF…IGLL.

It belongs to the complex I subunit 2 family. In terms of assembly, NDH is composed of at least 16 different subunits, 5 of which are encoded in the nucleus.

It is found in the plastid. The protein resides in the chloroplast thylakoid membrane. The enzyme catalyses a plastoquinone + NADH + (n+1) H(+)(in) = a plastoquinol + NAD(+) + n H(+)(out). It carries out the reaction a plastoquinone + NADPH + (n+1) H(+)(in) = a plastoquinol + NADP(+) + n H(+)(out). Functionally, NDH shuttles electrons from NAD(P)H:plastoquinone, via FMN and iron-sulfur (Fe-S) centers, to quinones in the photosynthetic chain and possibly in a chloroplast respiratory chain. The immediate electron acceptor for the enzyme in this species is believed to be plastoquinone. Couples the redox reaction to proton translocation, and thus conserves the redox energy in a proton gradient. The polypeptide is NAD(P)H-quinone oxidoreductase subunit 2, chloroplastic (Coelogyne cristata (Orchid)).